A 49-amino-acid chain; its full sequence is Large ribosomal subunit protein bL33B (49 aa).

The protein belongs to the bacterial ribosomal protein bL33 family.

The protein is Large ribosomal subunit protein bL33B of Limosilactobacillus reuteri subsp. reuteri (strain JCM 1112) (Lactobacillus reuteri).